A 490-amino-acid chain; its full sequence is 5-hydroxytryptamine receptor 3A (490 aa).

An N-terminal signal peptide occupies residues 1 to 19; the sequence is MVLWLQLALLALLLPTSLA. Topologically, residues 20–249 are extracellular; sequence QGEVRGKGTA…FYVVIRRRPL (230 aa). Asn33, Asn109, Asn175, and Asn191 each carry an N-linked (GlcNAc...) asparagine glycan. Residues Cys162 and Cys176 are joined by a disulfide bond. A helical transmembrane segment spans residues 250 to 270; the sequence is FYAVTLLLPSIFLMIVDIVGF. The Cytoplasmic portion of the chain corresponds to 271-285; it reads YLPPDSGERVSFKIT. Residues 286–306 traverse the membrane as a helical segment; it reads LLLGYSVFLIIVSDTLPATAI. The Extracellular portion of the chain corresponds to 307 to 312; that stretch reads GTPLIS. A helical transmembrane segment spans residues 313–333; it reads VYFVVCMALLVISLAETILIV. Over 334–467 the chain is Cytoplasmic; sequence RLVHKQDLQQ…GSVLDKLLFR (134 aa). A disordered region spans residues 401–422; that stretch reads GGPQDLEKTSRGRGSPPPPPRE. The tract at residues 426–462 is HA-stretch; determines single-channel conductance in 5-HT3 receptors; the sequence is AMCGLLQELASIRHFLEKREETREVARDWLRVGSVLD. A helical membrane pass occupies residues 468–488; it reads VYLLAVLAYSITLVTLWSVWH. The Extracellular portion of the chain corresponds to 489–490; it reads YA.

The protein belongs to the ligand-gated ion channel (TC 1.A.9) family. 5-hydroxytryptamine receptor (TC 1.A.9.2) subfamily. HTR3A sub-subfamily. Forms homopentameric as well as heteropentameric serotonin-activated cation-selective channel complexes with HTR3B or HTR3C or HTR3D or HTR3E. The homomeric complex is functional but exhibits low conductance with modified voltage dependence, and decreased agonist and antagonist affinity. Heteropentameric complexes display properties which resemble that of neuronal serotonin-activated channels in vivo. Interacts with RIC3. Expressed in cortex, intestine and liver. Not expressed in muscle or spleen.

Its subcellular location is the postsynaptic cell membrane. It is found in the cell membrane. The catalysed reaction is Na(+)(in) = Na(+)(out). It carries out the reaction K(+)(in) = K(+)(out). It catalyses the reaction Ca(2+)(in) = Ca(2+)(out). The enzyme catalyses Mg(2+)(in) = Mg(2+)(out). Forms serotonin (5-hydroxytryptamine/5-HT3)-activated cation-selective channel complexes, which when activated cause fast, depolarizing responses in neurons. In Cavia porcellus (Guinea pig), this protein is 5-hydroxytryptamine receptor 3A.